The following is a 300-amino-acid chain: Acetylglutamate kinase (300 aa).

Residues 68–69 (GG), R90, and N195 each bind substrate.

This sequence belongs to the acetylglutamate kinase family. ArgB subfamily.

The protein localises to the cytoplasm. It catalyses the reaction N-acetyl-L-glutamate + ATP = N-acetyl-L-glutamyl 5-phosphate + ADP. Its pathway is amino-acid biosynthesis; L-arginine biosynthesis; N(2)-acetyl-L-ornithine from L-glutamate: step 2/4. Its function is as follows. Catalyzes the ATP-dependent phosphorylation of N-acetyl-L-glutamate. This is Acetylglutamate kinase from Stutzerimonas stutzeri (strain A1501) (Pseudomonas stutzeri).